Here is a 745-residue protein sequence, read N- to C-terminus: MDDASPLSNPAKEPAALRSLLGRTNRDWWPNQLSLDILHQHGRHGNPMGDDFDYAEAFKTLDYFAVKRDLHALMTDSQPWWPADYGHYGPFFIRMAWHSAGTYRTGDGRGGANSGNQRFAPLNSWPDNANLDKARRLLWPVKKKYGAKLSWADLMIMAGNVAFESMGAPVFGFGGGRADIFEPEKDVYWGTEEQWVGKGAKTRIVEGKAFEDPLAAVQMGLIYVNPEGPDGSPDPWASARDIRMTFARMGMNDEETLALTAGGHTFGKCHGAGDAAKIGAEPEGADIAQQGLGWTSSHESGMGDHTITSGLEGPWTPTPIKWDMSYFHMLLDYKYELVRSPAGAKQWQPVNPKPEDLAPGAHSPDRRVPTMMTTADLAFAMDPEYRKIAERFRDNPDQFADAFARAWFKLCHRDMGPKSRYLGPEVPAEDLIWQDPIPPVDHPLAEAADIASLKAKLLDSGLSVADLVRTAWASAATYRGSDHRGGANGARIRLAPQKDWEVNEPEKLARVLGVLEKVKADFDASAGGGKKISLADLIVLGGCAGIEKAARDAGHAIEVPFAPGRTDASPEQTDVESFEVLEPKADGFRNYLQVRFSVPTEELLIDRSQLLGLSAPEMTVLVGGLRVLGVNHGGSKNGVFTDRPGQLTNDFFVNLLDMGTAWKQVDDKADDLFVGTCRRTHEEKWTATRTDLVFGSNSQLRALSEVYASDDAGERFVKDFVRAWTKVMNADRFDLPRAQRLARAA.

Residues 97 to 223 (WHSAGTYRTG…LAAVQMGLIY (127 aa)) constitute a cross-link (tryptophyl-tyrosyl-methioninium (Trp-Tyr) (with M-249)). H98 (proton acceptor) is an active-site residue. The tryptophyl-tyrosyl-methioninium (Tyr-Met) (with W-97) cross-link spans 223–249 (YVNPEGPDGSPDPWASARDIRMTFARM). H264 is a heme b binding site. The tract at residues 345 to 368 (KQWQPVNPKPEDLAPGAHSPDRRV) is disordered.

This sequence belongs to the peroxidase family. Peroxidase/catalase subfamily. Homodimer or homotetramer. The cofactor is heme b. Post-translationally, formation of the three residue Trp-Tyr-Met cross-link is important for the catalase, but not the peroxidase activity of the enzyme.

The enzyme catalyses H2O2 + AH2 = A + 2 H2O. It catalyses the reaction 2 H2O2 = O2 + 2 H2O. Its function is as follows. Bifunctional enzyme with both catalase and broad-spectrum peroxidase activity. This Phenylobacterium zucineum (strain HLK1) protein is Catalase-peroxidase.